The sequence spans 456 residues: Methionine aminopeptidase 2 (456 aa).

The segment covering 1–11 (MTIPVPKPAHP) has biased composition (pro residues). Residues 1–127 (MTIPVPKPAH…SYRTTSSEKR (127 aa)) are disordered. Residues 31-45 (EADEEEDDDDEEGKE) show a composition bias toward acidic residues. Positions 66 to 79 (KKKKKKKKKPKKKK) are enriched in basic residues. His209 contacts substrate. Asp229, Asp240, and His309 together coordinate a divalent metal cation. Position 317 (His317) interacts with substrate. A divalent metal cation contacts are provided by Glu343 and Glu437.

It belongs to the peptidase M24A family. Methionine aminopeptidase eukaryotic type 2 subfamily. Co(2+) serves as cofactor. It depends on Zn(2+) as a cofactor. Requires Mn(2+) as cofactor. Fe(2+) is required as a cofactor.

The protein resides in the cytoplasm. It carries out the reaction Release of N-terminal amino acids, preferentially methionine, from peptides and arylamides.. In terms of biological role, cotranslationally removes the N-terminal methionine from nascent proteins. The N-terminal methionine is often cleaved when the second residue in the primary sequence is small and uncharged (Met-Ala-, Cys, Gly, Pro, Ser, Thr, or Val). This chain is Methionine aminopeptidase 2, found in Puccinia graminis f. sp. tritici (strain CRL 75-36-700-3 / race SCCL) (Black stem rust fungus).